The sequence spans 499 residues: Catalase (499 aa).

The interval 1-25 (MTDRPIMTTSAGAPIPDNQNSLTAG) is disordered. Over residues 7-23 (MTTSAGAPIPDNQNSLT) the composition is skewed to polar residues. Residues His-55 and Asn-127 contribute to the active site. Tyr-337 is a binding site for heme.

Belongs to the catalase family. As to quaternary structure, homotetramer. It depends on heme as a cofactor.

Its subcellular location is the periplasm. The enzyme catalyses 2 H2O2 = O2 + 2 H2O. Its function is as follows. Decomposes hydrogen peroxide into water and oxygen; serves to protect cells from the toxic effects of hydrogen peroxide. The sequence is that of Catalase (katA) from Brucella abortus biovar 1 (strain 9-941).